The following is a 43-amino-acid chain: uncharacterized protein (43 aa).

Residues 1–17 form the signal peptide; it reads MYRRLLLNLFCMVFLQA.

This is an uncharacterized protein from Helicobacter pylori (strain J99 / ATCC 700824) (Campylobacter pylori J99).